Here is a 546-residue protein sequence, read N- to C-terminus: Probable ganciclovir kinase (546 aa).

Positions 1–11 are enriched in polar residues; the sequence is MEQLKTPQNQK. The segment at 1–29 is disordered; it reads MEQLKTPQNQKTRPRNMLPKKKGKELKKR. The span at 12-29 shows a compositional bias: basic residues; sequence TRPRNMLPKKKGKELKKR. ATP contacts are provided by residues 185-193 and lysine 202; that span reads LGSGSYGMV. Aspartate 297 (proton acceptor) is an active-site residue.

Belongs to the protein kinase superfamily. Tyr protein kinase family. HCMV ganciclovir subfamily.

Its function is as follows. Phosphorylates the antiviral nucleoside analog ganciclovir. This chain is Probable ganciclovir kinase (U69), found in Human herpesvirus 7 (strain JI) (HHV-7).